The primary structure comprises 525 residues: Cytochrome P450 750A1 (525 aa).

Residues proline 13–leucine 33 traverse the membrane as a helical segment. Cysteine 465 provides a ligand contact to heme.

The protein belongs to the cytochrome P450 family. Requires heme as cofactor.

It is found in the membrane. The polypeptide is Cytochrome P450 750A1 (CYP750A1) (Pinus taeda (Loblolly pine)).